Here is a 316-residue protein sequence, read N- to C-terminus: Ribosomal RNA small subunit methyltransferase H (316 aa).

S-adenosyl-L-methionine-binding positions include 36 to 38, aspartate 56, phenylalanine 83, aspartate 104, and glutamine 111; that span reads GGH.

Belongs to the methyltransferase superfamily. RsmH family.

It localises to the cytoplasm. The enzyme catalyses cytidine(1402) in 16S rRNA + S-adenosyl-L-methionine = N(4)-methylcytidine(1402) in 16S rRNA + S-adenosyl-L-homocysteine + H(+). In terms of biological role, specifically methylates the N4 position of cytidine in position 1402 (C1402) of 16S rRNA. This Protochlamydia amoebophila (strain UWE25) protein is Ribosomal RNA small subunit methyltransferase H.